We begin with the raw amino-acid sequence, 601 residues long: Elongation factor 4 (601 aa).

Residues 6–188 (QFIRNFSIIA…AITKEIPAPK (183 aa)) enclose the tr-type G domain. GTP is bound by residues 18 to 23 (DHGKST) and 135 to 138 (NKID).

This sequence belongs to the TRAFAC class translation factor GTPase superfamily. Classic translation factor GTPase family. LepA subfamily.

The protein resides in the cell inner membrane. The catalysed reaction is GTP + H2O = GDP + phosphate + H(+). Functionally, required for accurate and efficient protein synthesis under certain stress conditions. May act as a fidelity factor of the translation reaction, by catalyzing a one-codon backward translocation of tRNAs on improperly translocated ribosomes. Back-translocation proceeds from a post-translocation (POST) complex to a pre-translocation (PRE) complex, thus giving elongation factor G a second chance to translocate the tRNAs correctly. Binds to ribosomes in a GTP-dependent manner. This is Elongation factor 4 from Leptospira borgpetersenii serovar Hardjo-bovis (strain JB197).